The chain runs to 179 residues: Large ribosomal subunit protein uL5 (179 aa).

The protein belongs to the universal ribosomal protein uL5 family. Part of the 50S ribosomal subunit; part of the 5S rRNA/L5/L18/L25 subcomplex. Contacts the 5S rRNA and the P site tRNA. Forms a bridge to the 30S subunit in the 70S ribosome.

In terms of biological role, this is one of the proteins that bind and probably mediate the attachment of the 5S RNA into the large ribosomal subunit, where it forms part of the central protuberance. In the 70S ribosome it contacts protein S13 of the 30S subunit (bridge B1b), connecting the 2 subunits; this bridge is implicated in subunit movement. Contacts the P site tRNA; the 5S rRNA and some of its associated proteins might help stabilize positioning of ribosome-bound tRNAs. The chain is Large ribosomal subunit protein uL5 from Bacillus pumilus (strain SAFR-032).